The sequence spans 117 residues: Large ribosomal subunit protein bL20 (117 aa).

Belongs to the bacterial ribosomal protein bL20 family.

Functionally, binds directly to 23S ribosomal RNA and is necessary for the in vitro assembly process of the 50S ribosomal subunit. It is not involved in the protein synthesizing functions of that subunit. The polypeptide is Large ribosomal subunit protein bL20 (Finegoldia magna (strain ATCC 29328 / DSM 20472 / WAL 2508) (Peptostreptococcus magnus)).